We begin with the raw amino-acid sequence, 38 residues long: Large ribosomal subunit protein bL36B (38 aa).

This sequence belongs to the bacterial ribosomal protein bL36 family.

This is Large ribosomal subunit protein bL36B from Prochlorococcus marinus (strain MIT 9515).